We begin with the raw amino-acid sequence, 504 residues long: FAD-dependent monooxygenase nsrK (504 aa).

Position 146 (Arg146) interacts with FAD. Arg227 is an active-site residue. FAD-binding residues include Asp340 and Gly353.

This sequence belongs to the paxM FAD-dependent monooxygenase family. Requires FAD as cofactor.

Its pathway is secondary metabolite biosynthesis. In terms of biological role, FAD-dependent monooxygenase; part of the gene cluster that mediates the biosynthesis of the tetrahydroxanthone dimer neosartorin, which exhibits antibacterial activity. The two different monomeric units appear to be synthesized by the same set of enzymes, among which the Baeyer-Villiger monooxygenase nsrF is the key enzyme for the divergence of the biosynthetic routes. The pathway begins with the synthesis of atrochrysone thioester by the polyketide synthase nsrB. The atrochrysone carboxyl ACP thioesterase nsrC then breaks the thioester bond and releases the atrochrysone carboxylic acid from AacuL. Atrochrysone carboxylic acid is decarboxylated by the decarboxylase nsrE, and oxidized by the anthrone oxygenase nsrD to yield emodin. Emodin is then reduced to emodin hydroquinone by the oxidoreductase nsrR. A-ring reduction by the short chain dehydrogenase nsrJ, dehydration by the scytalone dehydratase-like protein nsrI and probable spontaneous re-oxidation, results in overall deoxygenation to chrysophanol. The Baeyer-Villiger monooxygenase nsrF accepts chrysophanol as a substrate to insert one oxygen atom at two different positions to yield the precursors of both monomric units. NsrF is promiscuous/flexible in interacting with the 2 (non methylated and methylated) aromatic rings of chrysophanol, thus diverging the biosynthetic pathway at this point. After the hydrolysis of the lactones, methylesterification by the methyltransferase nsrG yields respectively moniliphenone and 2,2',6'-trihydroxy-4-methyl-6-methoxya-cyldiphenylmethanone. The next steps are the hydroxylation by the FAD-dependent monooxygenase nsrK, followed by isomerization by the monooxygenase nsrQ. The short chain dehydrogenase/reductase nsrO then catalyzes the C-5 ketoreduction to give the xanthone skeleton of blennolide C and 5-acetylblennolide A. The acetyltransferase nsrL has a strict substrate specificity and uses only blennolide A but not blennolide C to yield 5-acetylblennolide A as the single-acetylated product. In the final step of the biosynthesis, the heterodimerization of the 2 xanthones, blennolide C and 5-acetylblennolide A, is catalyzed by the cytochrome P450 monooxygenase nsrP. NsrP can utilize at least three different xanthones as its substrates to perform the dimerization reaction. This chain is FAD-dependent monooxygenase nsrK, found in Aspergillus novofumigatus (strain IBT 16806).